Consider the following 114-residue polypeptide: Iron-sulfur cluster insertion protein ErpA (114 aa).

Iron-sulfur cluster is bound by residues Cys42, Cys106, and Cys108.

This sequence belongs to the HesB/IscA family. In terms of assembly, homodimer. Iron-sulfur cluster serves as cofactor.

Its function is as follows. Required for insertion of 4Fe-4S clusters for at least IspG. The protein is Iron-sulfur cluster insertion protein ErpA of Pseudoalteromonas atlantica (strain T6c / ATCC BAA-1087).